Consider the following 859-residue polypeptide: Protein O-mannosyl-transferase Tmtc1 (859 aa).

Residues 1–22 (MHTPKCRRPSMSATLSHKDLAG) are Cytoplasmic-facing. A helical membrane pass occupies residues 23–43 (LAGCSALAFVLYLNTLNAGFV). Residues 44-103 (YDDRRAILANGDVTGARPLANLLRNDFWGTPLVDSGSHGSWRPLCVLSFRLNYLAGGMTP) are Extracellular-facing. A helical transmembrane segment spans residues 104 to 124 (LGYHLVNVMLHCVATWLVFLV). Topologically, residues 125-134 (ARTLLPSRMG) are cytoplasmic. The next 2 helical transmembrane spans lie at 135–154 (VLAA…AVAG) and 155–174 (LVGR…YLSY). Residues 175 to 189 (RRHMLNREWGSLILT) are Cytoplasmic-facing. A helical membrane pass occupies residues 190 to 210 (IMLALAALLCKETAITALLLC). Over 211 to 245 (GLCDVLSPVGRENSDKVCDGSISGLASFNFQRRFR) the chain is Extracellular. A helical transmembrane segment spans residues 246-266 (SLSILGFTLLCGLYCRLSLLP). Over 267 to 288 (RPSTAFSAADNPTAHESCFWTR) the chain is Cytoplasmic. Residues 289 to 309 (TLTFLYLPVANFGILLWPQEL) traverse the membrane as a helical segment. Topologically, residues 310–328 (SFDWGMEAVSRIRTLWDAR) are extracellular. Residues 329–349 (NILTAGFYGSLVAILWKGSGL) form a helical membrane-spanning segment. Residues 350-422 (RSAASPMDFA…SWTAAPILGT (73 aa)) are Cytoplasmic-facing. Residues 423-443 (AFLVLPFLPASNLLFYVGFVM) form a helical membrane-spanning segment. Residues 444 to 446 (AER) lie on the Extracellular side of the membrane. The chain crosses the membrane as a helical span at residues 447–467 (VLYLPSVGYCLLFGLGFGHLW). Topologically, residues 468 to 473 (QRVNSS) are cytoplasmic. A helical membrane pass occupies residues 474-493 (WRSRLMLLCGLALLLGVHGV). The Extracellular segment spans residues 494 to 859 (RTFRRNLDWR…RMNVHKHENE (366 aa)). 9 TPR repeats span residues 518–551 (PKAL…RPTM), 552–585 (ADAH…RPQL), 586–620 (AVAY…EGSG), 632–665 (YTCY…LPLL), 671–704 (AVLH…QPEQ), 705–739 (GAAY…APLE), 740–773 (PSSH…APQD), 774–807 (YTLQ…QPMA), and 808–841 (AHAH…QPGH). Residue Asn-567 is glycosylated (N-linked (GlcNAc...) asparagine). Asn-718 is a glycosylation site (N-linked (GlcNAc...) asparagine).

The protein belongs to the TMTC family.

Its subcellular location is the membrane. The protein resides in the endoplasmic reticulum. It catalyses the reaction a di-trans,poly-cis-dolichyl beta-D-mannosyl phosphate + L-seryl-[protein] = 3-O-(alpha-D-mannosyl)-L-seryl-[protein] + a di-trans,poly-cis-dolichyl phosphate + H(+). The enzyme catalyses a di-trans,poly-cis-dolichyl beta-D-mannosyl phosphate + L-threonyl-[protein] = 3-O-(alpha-D-mannosyl)-L-threonyl-[protein] + a di-trans,poly-cis-dolichyl phosphate + H(+). It functions in the pathway protein modification; protein glycosylation. In terms of biological role, transfers mannosyl residues to the hydroxyl group of serine or threonine residues. In Drosophila melanogaster (Fruit fly), this protein is Protein O-mannosyl-transferase Tmtc1.